Consider the following 148-residue polypeptide: MKALVAVSAVAVVALLGVSSAQADPEADPGAGEANYGGPPSSPRLVDHTEWAQWGSLPSLRVYPSQVGRTASRRLGMAAADAAWAEVLALSPEADTAGMRAQFICHWQYAEIRQPGKPSWNLEPWRPVVDDSEMLASGCNPGSPEESF.

A signal peptide spans 1-23; that stretch reads MKALVAVSAVAVVALLGVSSAQA. The interval 22–45 is disordered; sequence QADPEADPGAGEANYGGPPSSPRL.

This sequence to M.leprae ML2452.

This is an uncharacterized protein from Mycobacterium bovis (strain ATCC BAA-935 / AF2122/97).